The following is a 33-amino-acid chain: Cytochrome b6-f complex subunit 8 (33 aa).

Residues 2–22 (IFQIGWAALAAIFTFSIAMVV) form a helical membrane-spanning segment.

Belongs to the PetN family. In terms of assembly, the 4 large subunits of the cytochrome b6-f complex are cytochrome b6, subunit IV (17 kDa polypeptide, PetD), cytochrome f and the Rieske protein, while the 4 small subunits are PetG, PetL, PetM and PetN. The complex functions as a dimer.

The protein resides in the cellular thylakoid membrane. In terms of biological role, component of the cytochrome b6-f complex, which mediates electron transfer between photosystem II (PSII) and photosystem I (PSI), cyclic electron flow around PSI, and state transitions. The polypeptide is Cytochrome b6-f complex subunit 8 (Prochlorococcus marinus (strain MIT 9301)).